The following is a 21-amino-acid chain: Magainin-B1 (21 aa).

Expressed by the skin glands.

Its subcellular location is the secreted. In terms of biological role, has no antimicrobial activity against tested bacteria. This chain is Magainin-B1, found in Xenopus borealis (Kenyan clawed frog).